The following is an 895-amino-acid chain: Cellulose 1,4-beta-cellobiosidase (895 aa).

The signal sequence occupies residues 1-27 (MNFRRMLCAAIVLTIVLSIMLPSTVFA). A CBM-cenC domain is found at 40-199 (NDLLYERTFD…YLDDVSLYDP (160 aa)). Residues 199-240 (PRFVKPVEYVLPQPDVRVNQVGYLPFAKKYATVVSSSTSPLK) are linker. The interval 241-815 (WQLLNSANQV…WVTAYLDEID (575 aa)) is catalytic. The Nucleophile role is filled by Asp-386. Residues His-737, Asp-786, and Glu-795 contribute to the active site. Residues 828–894 (PEVIYGDCNG…ILKEIDVLPH (67 aa)) form the Dockerin domain.

Belongs to the glycosyl hydrolase 9 (cellulase E) family.

It localises to the secreted. The enzyme catalyses Hydrolysis of (1-&gt;4)-beta-D-glucosidic linkages in cellulose and cellotetraose, releasing cellobiose from the non-reducing ends of the chains.. With respect to regulation, inhibited by cellobiose. In Acetivibrio thermocellus (Hungateiclostridium thermocellum), this protein is Cellulose 1,4-beta-cellobiosidase (celK).